The sequence spans 366 residues: Leucine dehydrogenase (366 aa).

K80 is a catalytic residue. Residue 180–186 (GVGHVAY) participates in NAD(+) binding.

This sequence belongs to the Glu/Leu/Phe/Val dehydrogenases family. In terms of assembly, homooctamer.

The enzyme catalyses L-leucine + NAD(+) + H2O = 4-methyl-2-oxopentanoate + NH4(+) + NADH + H(+). It functions in the pathway amino-acid degradation; L-leucine degradation; 4-methyl-2-oxopentanoate from L-leucine (dehydrogenase route): step 1/1. With respect to regulation, inhibited by pyridoxal phosphate. Functionally, catalyzes the reversible deamination of L-leucine to 4-methyl-2-oxopentanoate. Exhibits the highest activity with L-leucine as substrate, but can also use other L-amino acids such as L-isoleucine, L-valine and L-2-aminovaleric acid. All of the oxo analogs of the amino acid substrates serve as good substrates for the reverse reaction. This chain is Leucine dehydrogenase (ldh), found in Thermoactinomyces intermedius.